Here is a 565-residue protein sequence, read N- to C-terminus: Probable peptidoglycan D,D-transpeptidase PbpC (565 aa).

A helical transmembrane segment spans residues 10-30; that stretch reads FILVVTLFVLASLAVSGRLVY. The Acyl-ester intermediate role is filled by serine 289.

Belongs to the transpeptidase family. FtsI subfamily.

The protein resides in the cell inner membrane. The catalysed reaction is Preferential cleavage: (Ac)2-L-Lys-D-Ala-|-D-Ala. Also transpeptidation of peptidyl-alanyl moieties that are N-acyl substituents of D-alanine.. It participates in cell wall biogenesis; peptidoglycan biosynthesis. In terms of biological role, catalyzes cross-linking of the peptidoglycan cell wall at the division septum. Binds penicillin. In Pseudomonas aeruginosa (strain ATCC 15692 / DSM 22644 / CIP 104116 / JCM 14847 / LMG 12228 / 1C / PRS 101 / PAO1), this protein is Probable peptidoglycan D,D-transpeptidase PbpC.